Here is a 345-residue protein sequence, read N- to C-terminus: Biotin synthase (345 aa).

Residues 67–295 form the Radical SAM core domain; it reads YKVQLASLLS…KSRIRLSAGR (229 aa). The [4Fe-4S] cluster site is built by cysteine 82, cysteine 86, and cysteine 89. [2Fe-2S] cluster-binding residues include cysteine 126, cysteine 158, cysteine 218, and arginine 290.

This sequence belongs to the radical SAM superfamily. Biotin synthase family. Homodimer. [4Fe-4S] cluster serves as cofactor. [2Fe-2S] cluster is required as a cofactor.

The enzyme catalyses (4R,5S)-dethiobiotin + (sulfur carrier)-SH + 2 reduced [2Fe-2S]-[ferredoxin] + 2 S-adenosyl-L-methionine = (sulfur carrier)-H + biotin + 2 5'-deoxyadenosine + 2 L-methionine + 2 oxidized [2Fe-2S]-[ferredoxin]. It functions in the pathway cofactor biosynthesis; biotin biosynthesis; biotin from 7,8-diaminononanoate: step 2/2. Functionally, catalyzes the conversion of dethiobiotin (DTB) to biotin by the insertion of a sulfur atom into dethiobiotin via a radical-based mechanism. The polypeptide is Biotin synthase (Prochlorococcus marinus (strain NATL1A)).